Reading from the N-terminus, the 382-residue chain is D-galactonate dehydratase (382 aa).

Position 183 (D183) interacts with Mg(2+). Catalysis depends on H185, which acts as the Proton donor. E209 and E235 together coordinate Mg(2+). H285 (proton acceptor) is an active-site residue.

Belongs to the mandelate racemase/muconate lactonizing enzyme family. GalD subfamily. It depends on Mg(2+) as a cofactor.

It carries out the reaction D-galactonate = 2-dehydro-3-deoxy-D-galactonate + H2O. It participates in carbohydrate acid metabolism; D-galactonate degradation; D-glyceraldehyde 3-phosphate and pyruvate from D-galactonate: step 1/3. Catalyzes the dehydration of D-galactonate to 2-keto-3-deoxy-D-galactonate. This Salmonella choleraesuis (strain SC-B67) protein is D-galactonate dehydratase.